The primary structure comprises 274 residues: Protein TIC 20-I, chloroplastic (274 aa).

A chloroplast-targeting transit peptide spans 1–65; that stretch reads MITGYSTPSA…ELPRVSRGVP (65 aa). Transmembrane regions (helical) follow at residues 130 to 152, 167 to 187, 200 to 220, and 229 to 249; these read LPYL…LHPF, IGRL…LGIV, VVMG…SKWM, and FGMH…LESI.

Belongs to the Tic20 family. As to quaternary structure, part of the Tic complex. Component of the 1-MD complex, composed of TIC20-I, TIC214, TIC100 and TIC56. Interacts with the translocating preproteins. Hydrolysis of ATP is essential for the formation of this complex. The 1-MD complex interacts with TIC21. In terms of tissue distribution, expressed in leaves, shoots and roots. High expression in mature photosynthetic tissues. Lower levels in non-photosynthetic tissues and roots.

It is found in the plastid. It localises to the chloroplast inner membrane. Its function is as follows. Involved in protein precursor import into chloroplasts. May be part of an intermediate translocation complex acting as a protein-conducting channel at the inner envelope. Seems to be specific for photosynthesis-related pre-proteins. Partially redundant with TIC20-IV, but not with TIC20-II or TIC20-V. This Arabidopsis thaliana (Mouse-ear cress) protein is Protein TIC 20-I, chloroplastic.